Reading from the N-terminus, the 417-residue chain is Guanine nucleotide-exchange factor SEC12 (417 aa).

At 1–388 (MGRRRGVELY…QLHLLPSRRS (388 aa)) the chain is on the cytoplasmic side. Tyr10 is subject to 3'-nitrotyrosine. A disordered region spans residues 101-135 (KGSKAEKSGSKEQGPRQRKGAPPAEKKSGAQVHPE). Basic and acidic residues predominate over residues 103–115 (SKAEKSGSKEQGP). WD repeat units follow at residues 152-191 (SNEP…KVLE), 194-232 (AHEG…TQLQ), and 298-337 (CGHE…RLYY). The helical transmembrane segment at 389 to 409 (VPVWLLLLLCVGLIIVTILLL) threads the bilayer. Residues 410 to 417 (QTAFPGFL) are Lumenal-facing.

In terms of assembly, interacts with SAR1B (GDP-bound form). Interacts with MIA2; recruits PREB to endoplasmic reticulum exit sites. Interacts with CIDEB; facilitating loading of SCAP-SREBP into COPII vesicles.

The protein resides in the endoplasmic reticulum membrane. It is found in the nucleus. In terms of biological role, guanine nucleotide exchange factor (GEF) that regulates the assembly of the coat protein complex II/COPII in endoplasmic reticulum (ER) to Golgi vesicle-mediated transport. Selectively activates SAR1A and SAR1B by promoting the exchange of guanosine diphosphate (GDP) for guanosine triphosphate (GTP) in these small GTPases. In their activated GTP-bound state, SAR1A and SAR1B insert into the membrane of the endoplasmic reticulum where they recruit the remainder of the coat protein complex II/COPII which is responsible for both the sorting of proteins and the deformation and budding of membranes into vesicles destined to the Golgi. Functionally, was first identified based on its probable role in the regulation of pituitary gene transcription. Binds to the prolactin gene (PRL) promoter and seems to activate transcription. In Mus musculus (Mouse), this protein is Guanine nucleotide-exchange factor SEC12.